The primary structure comprises 568 residues: Urocanate hydratase (568 aa).

NAD(+)-binding positions include 58 to 59 (GG), Gln136, 182 to 184 (GMG), Glu202, Arg207, 248 to 249 (NA), 269 to 273 (QTSAH), 279 to 280 (YL), and Tyr328. The active site involves Cys416. Gly498 contributes to the NAD(+) binding site.

It belongs to the urocanase family. NAD(+) serves as cofactor.

Its subcellular location is the cytoplasm. It carries out the reaction 4-imidazolone-5-propanoate = trans-urocanate + H2O. The protein operates within amino-acid degradation; L-histidine degradation into L-glutamate; N-formimidoyl-L-glutamate from L-histidine: step 2/3. Catalyzes the conversion of urocanate to 4-imidazolone-5-propionate. This Photobacterium profundum (strain SS9) protein is Urocanate hydratase.